The sequence spans 380 residues: Selenoprotein P (380 aa).

An N-terminal signal peptide occupies residues 1 to 19 (MWRSLGLALALCLLPYGGA). A non-standard amino acid (selenocysteine) is located at residue Sec59. N-linked (GlcNAc...) asparagine glycans are attached at residues Asn83, Asn176, and Asn195. The tract at residues 196–257 (KTAEPSEAHS…RGQHRQGHLE (62 aa)) is disordered. The span at 221–237 (SKPSENQQPGPSETTLP) shows a compositional bias: polar residues. The segment covering 241 to 253 (LHHHHRHRGQHRQ) has biased composition (basic residues). A non-standard amino acid (selenocysteine) is located at residue Sec259. Phosphoserine is present on Ser264. Residues Sec277, Sec318, Sec330, and Sec352 are each a non-standard amino acid (selenocysteine). A disordered region spans residues 346-380 (RSPPAAUQNQPMNPMEANPNUSUDNQTRKUKUHSN). Low complexity predominate over residues 348 to 360 (PPAAUQNQPMNPM). Asn365 carries N-linked (GlcNAc...) asparagine glycosylation. Non-standard amino acids (selenocysteine) are located at Sec366 and Sec368. Residue Asn370 is glycosylated (N-linked (GlcNAc...) asparagine). 2 non-standard amino acids (selenocysteine) are found at residues Sec375 and Sec377.

Belongs to the selenoprotein P family. Post-translationally, phosphorylation sites are present in the extracellular medium. In terms of tissue distribution, in the kidney, expressed in the cortex with no expression observed in the medulla (at protein level). Expressed by the liver and secreted in plasma.

It is found in the secreted. Functionally, might be responsible for some of the extracellular antioxidant defense properties of selenium or might be involved in the transport of selenium. May supply selenium to tissues such as brain and testis. This is Selenoprotein P from Mus musculus (Mouse).